A 465-amino-acid chain; its full sequence is Ribulose bisphosphate carboxylase large chain (465 aa).

Position 4 is an N6,N6,N6-trimethyllysine (Lys-4). The substrate site is built by Asn-113 and Thr-163. Catalysis depends on Lys-165, which acts as the Proton acceptor. Lys-167 lines the substrate pocket. Lys-191, Asp-193, and Glu-194 together coordinate Mg(2+). The residue at position 191 (Lys-191) is an N6-carboxylysine. The active-site Proton acceptor is His-284. Substrate-binding residues include Arg-285, His-317, and Ser-369.

The protein belongs to the RuBisCO large chain family. Type I subfamily. Heterohexadecamer of 8 large chains and 8 small chains; disulfide-linked. The disulfide link is formed within the large subunit homodimers. Requires Mg(2+) as cofactor. In terms of processing, the disulfide bond which can form in the large chain dimeric partners within the hexadecamer appears to be associated with oxidative stress and protein turnover.

The protein resides in the plastid. It localises to the chloroplast. It carries out the reaction 2 (2R)-3-phosphoglycerate + 2 H(+) = D-ribulose 1,5-bisphosphate + CO2 + H2O. It catalyses the reaction D-ribulose 1,5-bisphosphate + O2 = 2-phosphoglycolate + (2R)-3-phosphoglycerate + 2 H(+). Functionally, ruBisCO catalyzes two reactions: the carboxylation of D-ribulose 1,5-bisphosphate, the primary event in carbon dioxide fixation, as well as the oxidative fragmentation of the pentose substrate in the photorespiration process. Both reactions occur simultaneously and in competition at the same active site. The sequence is that of Ribulose bisphosphate carboxylase large chain from Cyrilla racemiflora (Swamp titi).